A 726-amino-acid chain; its full sequence is Pre-mRNA-splicing factor CLF1 (726 aa).

HAT repeat units follow at residues 55 to 87, 89 to 121, 123 to 155, 157 to 188, 190 to 221, 223 to 262, 264 to 298, 308 to 340, 352 to 386, 396 to 432, 434 to 465, 467 to 499, 501 to 534, 536 to 567, 585 to 626, and 635 to 667; these read EFQA…WEAS, NEYE…MELK, RNIN…LEEL, LNVS…LEER, NELD…FEED, GQPD…METR, KEFE…FEKQ, TVLG…LEED, VEPM…LWLQ, KDYD…FEIR, LDVS…LEMR, REFD…VESA, EDFE…FEAG, GERE…MEIA, GDAD…EHGD, and DMLP…DDER. The tract at residues 682 to 726 is disordered; sequence AWAQQRAGQGEEGGLSYDLPSDSEDENEDGDEDGDGREEEGMDQD. A compositionally biased stretch (acidic residues) spans 702–726; that stretch reads SDSEDENEDGDEDGDGREEEGMDQD.

This sequence belongs to the crooked-neck family. Associated with the spliceosome.

The protein resides in the nucleus. Its function is as follows. Involved in pre-mRNA splicing and cell cycle progression. Required for the spliceosome assembly and initiation of the DNA replication. This chain is Pre-mRNA-splicing factor CLF1 (CLF1), found in Cryptococcus neoformans var. neoformans serotype D (strain B-3501A) (Filobasidiella neoformans).